The following is a 412-amino-acid chain: CCA-adding enzyme (412 aa).

Residues S41 and K44 each contribute to the ATP site. CTP contacts are provided by S41 and K44. Residues D53, D55, and D106 each coordinate Mg(2+). 3 residues coordinate ATP: H129, K149, and Y158. Residues H129, K149, and Y158 each contribute to the CTP site.

The protein belongs to the tRNA nucleotidyltransferase/poly(A) polymerase family. Archaeal CCA-adding enzyme subfamily. Homodimer. It depends on Mg(2+) as a cofactor.

It catalyses the reaction a tRNA precursor + 2 CTP + ATP = a tRNA with a 3' CCA end + 3 diphosphate. The catalysed reaction is a tRNA with a 3' CCA end + 2 CTP + ATP = a tRNA with a 3' CCACCA end + 3 diphosphate. Its function is as follows. Catalyzes the addition and repair of the essential 3'-terminal CCA sequence in tRNAs without using a nucleic acid template. Adds these three nucleotides in the order of C, C, and A to the tRNA nucleotide-73, using CTP and ATP as substrates and producing inorganic pyrophosphate. tRNA 3'-terminal CCA addition is required both for tRNA processing and repair. Also involved in tRNA surveillance by mediating tandem CCA addition to generate a CCACCA at the 3' terminus of unstable tRNAs. While stable tRNAs receive only 3'-terminal CCA, unstable tRNAs are marked with CCACCA and rapidly degraded. This is CCA-adding enzyme from Saccharolobus islandicus (strain Y.N.15.51 / Yellowstone #2) (Sulfolobus islandicus).